Here is a 118-residue protein sequence, read N- to C-terminus: Large ribosomal subunit protein bL19 (118 aa).

It belongs to the bacterial ribosomal protein bL19 family.

In terms of biological role, this protein is located at the 30S-50S ribosomal subunit interface and may play a role in the structure and function of the aminoacyl-tRNA binding site. In Teredinibacter turnerae (strain ATCC 39867 / T7901), this protein is Large ribosomal subunit protein bL19.